A 497-amino-acid chain; its full sequence is Basic immunoglobulin-like variable motif-containing protein (497 aa).

4 disordered regions span residues 1-24 (MPNI…KSQP), 150-173 (TSKL…KAKP), 426-462 (GTLR…GRSF), and 478-497 (IRER…EGND). Residues 152 to 169 (KLKRSGVKKQTPKKKPDR) are compositionally biased toward basic residues. Over residues 442–451 (PKSESEDNVS) the composition is skewed to basic and acidic residues.

Belongs to the BIVM family.

It is found in the cytoplasm. It localises to the nucleus. This is Basic immunoglobulin-like variable motif-containing protein (bivm) from Xenopus laevis (African clawed frog).